We begin with the raw amino-acid sequence, 474 residues long: GTPase Der (474 aa).

EngA-type G domains follow at residues 3 to 167 and 204 to 379; these read LTIA…GSER and IRIA…RVWN. GTP contacts are provided by residues 9 to 16, 56 to 60, 119 to 122, 210 to 217, 257 to 261, and 322 to 325; these read GRPNVGKS, DTAGL, NKSE, GRPNTGKS, and NKWD. Residues 380 to 464 enclose the KH-like domain; it reads RRISTAKLNQ…PVRLSLRASD (85 aa).

It belongs to the TRAFAC class TrmE-Era-EngA-EngB-Septin-like GTPase superfamily. EngA (Der) GTPase family. In terms of assembly, associates with the 50S ribosomal subunit.

GTPase that plays an essential role in the late steps of ribosome biogenesis. This is GTPase Der from Bartonella tribocorum (strain CIP 105476 / IBS 506).